Here is a 312-residue protein sequence, read N- to C-terminus: HPr kinase/phosphorylase (312 aa).

Catalysis depends on residues histidine 139 and lysine 160. 154-161 serves as a coordination point for ATP; sequence GSSGVGKS. Serine 161 lines the Mg(2+) pocket. Aspartate 178 serves as the catalytic Proton acceptor; for phosphorylation activity. Proton donor; for dephosphorylation activity. The tract at residues 202–211 is important for the catalytic mechanism of both phosphorylation and dephosphorylation; sequence LEIRGLGIIN. A Mg(2+)-binding site is contributed by glutamate 203. Residue arginine 244 is part of the active site. The segment at 265-270 is important for the catalytic mechanism of dephosphorylation; it reads PVRPGR.

The protein belongs to the HPrK/P family. In terms of assembly, homohexamer. Mg(2+) serves as cofactor.

The catalysed reaction is [HPr protein]-L-serine + ATP = [HPr protein]-O-phospho-L-serine + ADP + H(+). It carries out the reaction [HPr protein]-O-phospho-L-serine + phosphate + H(+) = [HPr protein]-L-serine + diphosphate. Catalyzes the ATP- as well as the pyrophosphate-dependent phosphorylation of a specific serine residue in HPr, a phosphocarrier protein of the phosphoenolpyruvate-dependent sugar phosphotransferase system (PTS). HprK/P also catalyzes the pyrophosphate-producing, inorganic phosphate-dependent dephosphorylation (phosphorolysis) of seryl-phosphorylated HPr (P-Ser-HPr). The two antagonistic activities of HprK/P are regulated by several intracellular metabolites, which change their concentration in response to the absence or presence of rapidly metabolisable carbon sources (glucose, fructose, etc.) in the growth medium. Therefore, by controlling the phosphorylation state of HPr, HPrK/P is a sensor enzyme that plays a major role in the regulation of carbon metabolism and sugar transport: it mediates carbon catabolite repression (CCR), and regulates PTS-catalyzed carbohydrate uptake and inducer exclusion. The polypeptide is HPr kinase/phosphorylase (Listeria welshimeri serovar 6b (strain ATCC 35897 / DSM 20650 / CCUG 15529 / CIP 8149 / NCTC 11857 / SLCC 5334 / V8)).